A 129-amino-acid polypeptide reads, in one-letter code: Glycine cleavage system H protein (129 aa).

The region spanning 23-104 (SVTVGITQHA…CYAAWLFKLK (82 aa)) is the Lipoyl-binding domain. Lysine 64 carries the N6-lipoyllysine modification.

It belongs to the GcvH family. In terms of assembly, the glycine cleavage system is composed of four proteins: P, T, L and H. It depends on (R)-lipoate as a cofactor.

The glycine cleavage system catalyzes the degradation of glycine. The H protein shuttles the methylamine group of glycine from the P protein to the T protein. This is Glycine cleavage system H protein from Nitrosomonas europaea (strain ATCC 19718 / CIP 103999 / KCTC 2705 / NBRC 14298).